Consider the following 92-residue polypeptide: Non-specific lipid-transfer protein A (92 aa).

Cystine bridges form between Cys-3–Cys-51, Cys-13–Cys-28, Cys-29–Cys-74, and Cys-49–Cys-88.

The protein belongs to the plant LTP family.

Plant non-specific lipid-transfer proteins transfer phospholipids as well as galactolipids across membranes. May play a role in wax or cutin deposition in the cell walls of expanding epidermal cells and certain secretory tissues. The protein is Non-specific lipid-transfer protein A of Ricinus communis (Castor bean).